The chain runs to 316 residues: Protein lifeguard 2 (316 aa).

The segment at 1-53 (MTQGKLSVANKAPGTEGQQQVHGEKKEAPAVPSAPPSYEEATSGEGMKAGAFP) is disordered. A run of 3 helical transmembrane segments spans residues 106 to 126 (VYTILLIQLLVTLAVVALFTF), 138 to 158 (PGWYWASYAVFFATYLTLACC), and 165 to 185 (FPWNLILLTVFTLSMAYLTGM). Residue Asn191 is glycosylated (N-linked (GlcNAc...) asparagine). 4 helical membrane passes run 194-214 (SVLLCLGITALVCLSVTVFSF), 225-245 (GVLFVLPMTLFFSGLILAILL), 250-270 (VPWLHAVYAALGAGVFTLFLA), and 290-310 (IFGALNIYLDIIYIFTFFLQL).

The protein belongs to the BI1 family. LFG subfamily. In terms of assembly, interacts with FAS/TNFRSF6 and BAX.

It is found in the cell membrane. Its subcellular location is the membrane raft. The protein localises to the postsynaptic cell membrane. Functionally, antiapoptotic protein which protects cells uniquely from Fas-induced apoptosis. Regulates Fas-mediated apoptosis in neurons by interfering with caspase-8 activation. Plays a role in cerebellar development by affecting cerebellar size, internal granular layer (IGL) thickness, and Purkinje cell (PC) development. The polypeptide is Protein lifeguard 2 (FAIM2) (Pongo abelii (Sumatran orangutan)).